The following is a 298-amino-acid chain: Acetylglutamate kinase (298 aa).

Substrate-binding positions include 69-70 (GG), R91, and N191.

The protein belongs to the acetylglutamate kinase family. ArgB subfamily.

The protein resides in the cytoplasm. The enzyme catalyses N-acetyl-L-glutamate + ATP = N-acetyl-L-glutamyl 5-phosphate + ADP. The protein operates within amino-acid biosynthesis; L-arginine biosynthesis; N(2)-acetyl-L-ornithine from L-glutamate: step 2/4. Catalyzes the ATP-dependent phosphorylation of N-acetyl-L-glutamate. The protein is Acetylglutamate kinase of Neisseria meningitidis serogroup C (strain 053442).